The following is a 576-amino-acid chain: Zinc finger protein 791 (576 aa).

The KRAB domain maps to 4–90 (VAFKDVSVSF…AETFSPNLSV (87 aa)). 17 consecutive C2H2-type zinc fingers follow at residues 100–122 (YECTICGKVFMRLSSLTRHMRSH), 132–154 (YKCKECGKAFSYLKSFQRHERSH), 160–182 (YKCKQCGKTFIYHQPFQRHEQTH), 188–210 (YECKQCGKALSCSSSLRVHERIH), 216–238 (YECKQCGKAFSCSSSIRVHERTH), 244–266 (YACKECGKAFISHTSVLTHMITH), 272–294 (YKCKECGKAFIFPSFLRVHERIH), 300–322 (YTCKQCGKAFRCSTSIQIHERIH), 328–350 (YKCKECGKSFSARPAFRVHVRVH), 356–378 (YKCKECGKAFSRISYFRIHERTH), 384–406 (YECKKCGKTFNYPLDLQIHKRNH), 412–434 (YECKECAKTFISLENFRRHMITH), 440–462 (YKCRDCGKVFIFPSALRTHERTH), 468–490 (YECKQCGKAFSCSSYIRIHKRTH), 496–518 (YECKECGKAFIYPTSFQGHMRMH), 524–546 (YKCKECGKAFSLHSSFQRHTRIH), and 552–574 (LECKQCGKAFSLSTSLKKHMRMH).

Belongs to the krueppel C2H2-type zinc-finger protein family.

Its subcellular location is the nucleus. Functionally, may be involved in transcriptional regulation. The polypeptide is Zinc finger protein 791 (ZNF791) (Pongo abelii (Sumatran orangutan)).